The sequence spans 454 residues: Prenyltransferase nscD (454 aa).

Belongs to the tryptophan dimethylallyltransferase family.

It functions in the pathway secondary metabolite biosynthesis. Its function is as follows. Prenyltransferase; part of the gene cluster that mediates the biosynthesis of neosartoricin, a prenylated anthracenone that exhibits T-cell antiproliferative activity, suggestive of a physiological role as an immunosuppressive agent. The non-reducing polyketide synthase nscA probably synthesizes and cyclizes the decaketide backbone. The hydrolase nscB then mediates the product release through hydrolysis followed by spontaneous decarboxylation. The prenyltransferase nscD catalyzes the addition of the dimethylallyl group to the aromatic C5. The FAD-dependent monooxygenase nscC is then responsible for the stereospecific hydroxylation at C2. There is no gene encoding O-acetyltransferase in the nsc gene cluster; thus, the last step of 2-O-acetylation leading to neosartoricin may be catalyzed by an unidentified O-acetyltransferase. This is Prenyltransferase nscD from Neosartorya fischeri (strain ATCC 1020 / DSM 3700 / CBS 544.65 / FGSC A1164 / JCM 1740 / NRRL 181 / WB 181) (Aspergillus fischerianus).